The chain runs to 46 residues: Light-harvesting protein B800/850/890 alpha-1 chain (46 aa).

At 1–12 (MWRLWKLYDPRR) the chain is on the cytoplasmic side. Residues 13 to 33 (VLIGIFSWLAVLALVIHFILL) traverse the membrane as a helical segment. An a bacteriochlorophyll-binding site is contributed by His-29. The Periplasmic segment spans residues 34-46 (STDRFNWVGGAAN).

This sequence belongs to the antenna complex alpha subunit family. In terms of assembly, the core complex is formed by different alpha and beta chains, binding bacteriochlorophyll molecules, and arranged most probably in tetrameric structures disposed around the reaction center. The non-pigmented gamma chains may constitute additional components.

Its subcellular location is the cell inner membrane. In terms of biological role, antenna complexes are light-harvesting systems, which transfer the excitation energy to the reaction centers. The polypeptide is Light-harvesting protein B800/850/890 alpha-1 chain (Halorhodospira halophila (strain DSM 244 / SL1) (Ectothiorhodospira halophila (strain DSM 244 / SL1))).